Here is a 354-residue protein sequence, read N- to C-terminus: (R,R)-butanediol dehydrogenase (354 aa).

The Enoyl reductase (ER) domain maps to 10–350; the sequence is GDIRIEDIPE…NNESAVKIIV (341 aa). Residues Cys-37, His-71, and Glu-157 each contribute to the Zn(2+) site.

The protein belongs to the zinc-containing alcohol dehydrogenase family. Zn(2+) is required as a cofactor.

The enzyme catalyses (R,R)-butane-2,3-diol + NAD(+) = (R)-acetoin + NADH + H(+). The catalysed reaction is (S)-acetoin + NAD(+) = diacetyl + NADH + H(+). Its function is as follows. NAD-dependent butanediol dehydrogenase which catalyzes the oxidation of (R,R)-butane-2,3-diol to (3R)-acetoin and of meso-butane-2,3-diol to (3S)-acetoin. Preferentially oxidizes (R,R)-butane-2,3-diol, with a catalytic efficiency approximately fourfold higher than with meso-butane-2,3-diol. Shows a very low activity with (S,S)-butane-2,3-diol. Can also catalyze the reduction of (3R/3S)-acetoin and diacetyl in the presence of NADH. This chain is (R,R)-butanediol dehydrogenase, found in Neisseria gonorrhoeae (strain ATCC 700825 / FA 1090).